The primary structure comprises 572 residues: Dihydroxy-acid dehydratase (572 aa).

Cys-54 is a binding site for [2Fe-2S] cluster. Position 86 (Asp-86) interacts with Mg(2+). Cys-127 provides a ligand contact to [2Fe-2S] cluster. Positions 128 and 129 each coordinate Mg(2+). Lys-129 carries the post-translational modification N6-carboxylysine. Residue Cys-199 coordinates [2Fe-2S] cluster. Glu-449 is a Mg(2+) binding site. Residue Ser-475 is the Proton acceptor of the active site.

Belongs to the IlvD/Edd family. Homodimer. It depends on [2Fe-2S] cluster as a cofactor. The cofactor is Mg(2+).

It carries out the reaction (2R)-2,3-dihydroxy-3-methylbutanoate = 3-methyl-2-oxobutanoate + H2O. The catalysed reaction is (2R,3R)-2,3-dihydroxy-3-methylpentanoate = (S)-3-methyl-2-oxopentanoate + H2O. It participates in amino-acid biosynthesis; L-isoleucine biosynthesis; L-isoleucine from 2-oxobutanoate: step 3/4. It functions in the pathway amino-acid biosynthesis; L-valine biosynthesis; L-valine from pyruvate: step 3/4. Functions in the biosynthesis of branched-chain amino acids. Catalyzes the dehydration of (2R,3R)-2,3-dihydroxy-3-methylpentanoate (2,3-dihydroxy-3-methylvalerate) into 2-oxo-3-methylpentanoate (2-oxo-3-methylvalerate) and of (2R)-2,3-dihydroxy-3-methylbutanoate (2,3-dihydroxyisovalerate) into 2-oxo-3-methylbutanoate (2-oxoisovalerate), the penultimate precursor to L-isoleucine and L-valine, respectively. This Pelagibacter ubique (strain HTCC1062) protein is Dihydroxy-acid dehydratase.